Consider the following 256-residue polypeptide: Trans-aconitate 2-methyltransferase (256 aa).

This sequence belongs to the methyltransferase superfamily. Tam family.

It is found in the cytoplasm. It carries out the reaction trans-aconitate + S-adenosyl-L-methionine = (E)-3-(methoxycarbonyl)pent-2-enedioate + S-adenosyl-L-homocysteine. In terms of biological role, catalyzes the S-adenosylmethionine monomethyl esterification of trans-aconitate. The protein is Trans-aconitate 2-methyltransferase of Rhodopseudomonas palustris (strain BisA53).